Consider the following 299-residue polypeptide: Probable lipid kinase YegS (299 aa).

A DAGKc domain is found at 2–133 (ANFPASLLIL…IDMARVNDKT (132 aa)). ATP-binding positions include threonine 40, 66 to 72 (GDGTINE), and threonine 95. 3 residues coordinate Mg(2+): leucine 215, aspartate 218, and leucine 220. The active-site Proton acceptor is the glutamate 271.

The protein belongs to the diacylglycerol/lipid kinase family. YegS lipid kinase subfamily. It depends on Mg(2+) as a cofactor. Ca(2+) is required as a cofactor.

The protein resides in the cytoplasm. Its function is as follows. Probably phosphorylates lipids; the in vivo substrate is unknown. The chain is Probable lipid kinase YegS from Salmonella gallinarum (strain 287/91 / NCTC 13346).